A 291-amino-acid polypeptide reads, in one-letter code: MKRNDPCWCGSQKKWKHCHYPTKPERPSDNLRQLYASRYDIIIKTPDQIEKIRKACQVTARILDALCKAAKEGVTTNELDQLSCNLHKQYNAIPAPLNYGQPPFPKTICTSLNEVICHGIPNDTPLQNGDIMNIDVSCIVDGFYGDCSRMVMIGEVPEIKKKVCEASLEALNAAIAILEPNLPLYEIGEVIENCAARYGFSVVDQFVGHGVGVRFHENPYVAHHRNSCKIPLAPGMTFTIEPMINVGKKEGFIDPTNHWEARTCDHQPSAQWEHTVLITDSGYEILTLLDN.

Substrate is bound at residue H118. Positions 135, 146, and 209 each coordinate a divalent metal cation. H216 provides a ligand contact to substrate. Residues E241 and E273 each coordinate a divalent metal cation.

This sequence belongs to the peptidase M24A family. Methionine aminopeptidase type 1 subfamily. Monomer. Co(2+) is required as a cofactor. Zn(2+) serves as cofactor. Requires Mn(2+) as cofactor. The cofactor is Fe(2+).

The enzyme catalyses Release of N-terminal amino acids, preferentially methionine, from peptides and arylamides.. Removes the N-terminal methionine from nascent proteins. The N-terminal methionine is often cleaved when the second residue in the primary sequence is small and uncharged (Met-Ala-, Cys, Gly, Pro, Ser, Thr, or Val). Requires deformylation of the N(alpha)-formylated initiator methionine before it can be hydrolyzed. The polypeptide is Methionine aminopeptidase (Chlamydia muridarum (strain MoPn / Nigg)).